The sequence spans 1257 residues: Period circadian protein homolog 2 (1257 aa).

The interval 1–59 (MNGYVDFSPSPTSPTQEPGEPQPTQAVLQEDVDMSSGSSGNENCSTGRDSQGSDCDDSG) is disordered. A compositionally biased stretch (low complexity) spans 8–25 (SPSPTSPTQEPGEPQPTQ). Residues 35 to 53 (SSGSSGNENCSTGRDSQGS) show a composition bias toward polar residues. Residues 109–118 (LIRTLRELKV) carry the Nuclear export signal 1 motif. A PAS 1 domain is found at 179–246 (ITSEYIVKNS…FHSYTTPYKL (68 aa)). Positions 306-310 (LCCLL) match the LXXLL motif. The region spanning 319–385 (YEAPRIPPEK…MLAIHKKILQ (67 aa)) is the PAS 2 domain. The 44-residue stretch at 393–436 (YSPIRFRTRNGEYITLDTSWSSFINPWSRKISFIIGRHKVRVGP) folds into the PAC domain. The Nuclear export signal 2 motif lies at 460–469 (LTEQIHRLLM). Positions 471 to 567 (PVPHSGSSGY…RDSSGASLPK (97 aa)) are disordered. Positions 478–482 (SGYGS) are important for protein stability. Composition is skewed to polar residues over residues 493-504 (MSQTSSSDSNGQ) and 518-528 (SGKSQSKSHFS). A CSNK1E binding domain region spans residues 510 to 709 (RRSGIFKTSG…DAAGGLSQEK (200 aa)). S525, S528, S531, S538, and S544 each carry phosphoserine. Positions 541–555 (EMQSSPPAQVRSVTT) are enriched in polar residues. T554 bears the Phosphothreonine mark. S659, S693, S697, S706, S758, and S763 each carry phosphoserine. Disordered regions lie at residues 678-706 (DKKP…GGLS) and 757-833 (RSRA…CPSA). The Nuclear localization signal signature appears at 778 to 794 (KKTGKNRKLKSKRVKTR). Residues 779–792 (KTGKNRKLKSKRVK) are compositionally biased toward basic residues. Positions 821 to 832 (SPSDTSQSSCPS) are enriched in low complexity. T858 carries the post-translational modification Phosphothreonine. Residues 882-1067 (EFAVQPLPFA…DLCSATGSAL (186 aa)) form an interaction with PPARG region. Residue S939 is modified to Phosphoserine. T964 bears the Phosphothreonine mark. A Phosphoserine modification is found at S971. Positions 983–990 (LQLNLLQL) match the Nuclear export signal 3 motif. A disordered region spans residues 993–1044 (APESSTGAAGTLGTTGTAASGLDCTSGASRDRQPKAPPTCSEPSDTQNSDAI). Residues 996–1014 (SSTGAAGTLGTTGTAASGL) are compositionally biased toward low complexity. Over residues 1033 to 1044 (SEPSDTQNSDAI) the composition is skewed to polar residues. The LXXLL signature appears at 1051-1055 (LNLLL). Positions 1070–1089 (SGASATSDSLGSSSLGCDTS) are enriched in low complexity. The disordered stretch occupies residues 1070-1108 (SGASATSDSLGSSSLGCDTSRSGAGSSDTSHTSKYFGSI). A compositionally biased stretch (polar residues) spans 1090–1108 (RSGAGSSDTSHTSKYFGSI). S1126 carries the post-translational modification Phosphoserine. Positions 1157-1257 (SRDLQAVLKE…LANPRKEAQT (101 aa)) are CRY binding domain. The tract at residues 1226 to 1257 (EEDSPSLGLCDTSEAKEEESGQLANPRKEAQT) is disordered.

As to quaternary structure, homodimer. Component of the circadian core oscillator, which includes the CRY proteins, CLOCK or NPAS2, BMAL1 or BMAL2, CSNK1D and/or CSNK1E, TIMELESS, and the PER proteins. Interacts with CLOCK-BMAL1 (off DNA). Interacts directly with PER1 and PER3, and through a C-terminal domain, with CRY1 and CRY2. Interacts (via PAS 2 domain) with TIMELESS. Interacts with NFIL3. Different large complexes have been identified with different repressive functions. The core of PER complexes is composed of at least PER1, PER2, PER3, CRY1, CRY2, CSNK1D and/or CSNK1E. The large PER complex involved in the repression of transcriptional termination is composed of at least PER2, CDK9, DDX5, DHX9, NCBP1 and POLR2A (active). The large PER complex involved in the histone deacetylation is composed of at least HDAC1, PER2, SFPQ and SIN3A. The large PER complex involved in the histone methylation is composed of at least PER2, CBX3, TRIM28, SUV39H1 and/or SUV39H2; CBX3 mediates the formation of the complex. Interacts with SETX; the interaction inhibits termination of circadian target genes. Interacts with the nuclear receptors HNF4A, NR1D1, NR4A2, RORA, PPARA, PPARG and THRA; the interaction with at least PPARG is ligand dependent. Interacts with PML. Interacts (phosphorylated) with BTRC and FBXW11; the interactions trigger proteasomal degradation. Interacts with NONO and SFPQ. Interacts with CAVIN3. Interacts with MAGEL2. Interacts with MAP1LC3B. Interacts with HNF4A. In terms of processing, acetylated. Deacetylated by SIRT1, resulting in decreased protein stability. Deacetylated by SIRT6, preventing its degradation by the proteasome, resulting in increased protein stability. Phosphorylated by CSNK1E and CSNK1D. Phosphorylation results in PER2 protein degradation. May be dephosphorylated by PP1. Post-translationally, ubiquitinated, leading to its proteasomal degradation. Ubiquitination may be inhibited by CRY1. In terms of tissue distribution, expressed in all tissues examined including eye, brain, heart, lung, spleen, liver, pancreas and kidney. In the CNS, highly expressed in the SCN, internal granular layer of granular cells of the olfactory bulb, tuberculum olfactorium, piriform cortex, gyrus dentatus of the hippocampus, cerebellum, pars tuberalis/median eminence, and pituitary, and moderately in the tenia tecta, caudate putamen, accumbens nucleus, superior and inferior colliculus and pineal gland.

It is found in the nucleus. Its subcellular location is the cytoplasm. The protein resides in the perinuclear region. Functionally, transcriptional repressor which forms a core component of the circadian clock. The circadian clock, an internal time-keeping system, regulates various physiological processes through the generation of approximately 24 hour circadian rhythms in gene expression, which are translated into rhythms in metabolism and behavior. It is derived from the Latin roots 'circa' (about) and 'diem' (day) and acts as an important regulator of a wide array of physiological functions including metabolism, sleep, body temperature, blood pressure, endocrine, immune, cardiovascular, and renal function. Consists of two major components: the central clock, residing in the suprachiasmatic nucleus (SCN) of the brain, and the peripheral clocks that are present in nearly every tissue and organ system. Both the central and peripheral clocks can be reset by environmental cues, also known as Zeitgebers (German for 'timegivers'). The predominant Zeitgeber for the central clock is light, which is sensed by retina and signals directly to the SCN. The central clock entrains the peripheral clocks through neuronal and hormonal signals, body temperature and feeding-related cues, aligning all clocks with the external light/dark cycle. Circadian rhythms allow an organism to achieve temporal homeostasis with its environment at the molecular level by regulating gene expression to create a peak of protein expression once every 24 hours to control when a particular physiological process is most active with respect to the solar day. Transcription and translation of core clock components (CLOCK, NPAS2, BMAL1, BMAL2, PER1, PER2, PER3, CRY1 and CRY2) plays a critical role in rhythm generation, whereas delays imposed by post-translational modifications (PTMs) are important for determining the period (tau) of the rhythms (tau refers to the period of a rhythm and is the length, in time, of one complete cycle). A diurnal rhythm is synchronized with the day/night cycle, while the ultradian and infradian rhythms have a period shorter and longer than 24 hours, respectively. Disruptions in the circadian rhythms contribute to the pathology of cardiovascular diseases, cancer, metabolic syndrome and aging. A transcription/translation feedback loop (TTFL) forms the core of the molecular circadian clock mechanism. Transcription factors, CLOCK or NPAS2 and BMAL1 or BMAL2, form the positive limb of the feedback loop, act in the form of a heterodimer and activate the transcription of core clock genes and clock-controlled genes (involved in key metabolic processes), harboring E-box elements (5'-CACGTG-3') within their promoters. The core clock genes: PER1/2/3 and CRY1/2 which are transcriptional repressors form the negative limb of the feedback loop and interact with the CLOCK|NPAS2-BMAL1|BMAL2 heterodimer inhibiting its activity and thereby negatively regulating their own expression. This heterodimer also activates nuclear receptors NR1D1/2 and RORA/B/G, which form a second feedback loop and which activate and repress BMAL1 transcription, respectively. PER1 and PER2 proteins transport CRY1 and CRY2 into the nucleus with appropriate circadian timing, but also contribute directly to repression of clock-controlled target genes through interaction with several classes of RNA-binding proteins, helicases and others transcriptional repressors. PER appears to regulate circadian control of transcription by at least three different modes. First, interacts directly with the CLOCK-BMAL1 at the tail end of the nascent transcript peak to recruit complexes containing the SIN3-HDAC that remodel chromatin to repress transcription. Second, brings H3K9 methyltransferases such as SUV39H1 and SUV39H2 to the E-box elements of the circadian target genes, like PER2 itself or PER1. The recruitment of each repressive modifier to the DNA seems to be very precisely temporally orchestrated by the large PER complex, the deacetylases acting before than the methyltransferases. Additionally, large PER complexes are also recruited to the target genes 3' termination site through interactions with RNA-binding proteins and helicases that may play a role in transcription termination to regulate transcription independently of CLOCK-BMAL1 interactions. Recruitment of large PER complexes to the elongating polymerase at PER and CRY termination sites inhibited SETX action, impeding RNA polymerase II release and thereby repressing transcriptional reinitiation. May propagate clock information to metabolic pathways via the interaction with nuclear receptors. Coactivator of PPARA and corepressor of NR1D1, binds rhythmically at the promoter of nuclear receptors target genes like BMAL1 or G6PC1. Directly and specifically represses PPARG proadipogenic activity by blocking PPARG recruitment to target promoters and thereby transcriptional activation. Required for fatty acid and lipid metabolism, is involved as well in the regulation of circulating insulin levels. Plays an important role in the maintenance of cardiovascular functions through the regulation of NO and vasodilatatory prostaglandins production in aortas. Controls circadian glutamate uptake in synaptic vesicles through the regulation of VGLUT1 expression. May also be involved in the regulation of inflammatory processes. Represses the CLOCK-BMAL1 induced transcription of BHLHE40/DEC1 and ATF4. Negatively regulates the formation of the TIMELESS-CRY1 complex by competing with TIMELESS for binding to CRY1. This Rattus norvegicus (Rat) protein is Period circadian protein homolog 2.